A 182-amino-acid chain; its full sequence is ATP synthase subunit delta (182 aa).

It belongs to the ATPase delta chain family. As to quaternary structure, F-type ATPases have 2 components, F(1) - the catalytic core - and F(0) - the membrane proton channel. F(1) has five subunits: alpha(3), beta(3), gamma(1), delta(1), epsilon(1). CF(0) has four main subunits: a(1), b(1), b'(1) and c(10-14). The alpha and beta chains form an alternating ring which encloses part of the gamma chain. F(1) is attached to F(0) by a central stalk formed by the gamma and epsilon chains, while a peripheral stalk is formed by the delta, b and b' chains.

Its subcellular location is the cellular thylakoid membrane. F(1)F(0) ATP synthase produces ATP from ADP in the presence of a proton or sodium gradient. F-type ATPases consist of two structural domains, F(1) containing the extramembraneous catalytic core and F(0) containing the membrane proton channel, linked together by a central stalk and a peripheral stalk. During catalysis, ATP synthesis in the catalytic domain of F(1) is coupled via a rotary mechanism of the central stalk subunits to proton translocation. Its function is as follows. This protein is part of the stalk that links CF(0) to CF(1). It either transmits conformational changes from CF(0) to CF(1) or is implicated in proton conduction. The polypeptide is ATP synthase subunit delta (Synechococcus sp. (strain CC9902)).